A 786-amino-acid chain; its full sequence is AT-rich interactive domain-containing protein 3 (786 aa).

The segment covering M1–E16 has biased composition (low complexity). Disordered stretches follow at residues M1–D182, S199–N251, and D395–A420. Basic and acidic residues-rich tracts occupy residues E18 to S64 and D87 to S97. Low complexity predominate over residues E130–S139. 5 stretches are compositionally biased toward basic and acidic residues: residues I141–A156, K169–D182, S199–S219, A234–I248, and N402–D416. In terms of domain architecture, ARID spans E494–V585. The tract at residues Q606 to D638 is disordered. Residues V686 to E786 form the sHSP domain.

This sequence belongs to the small heat shock protein (HSP20) family.

It localises to the nucleus. This is AT-rich interactive domain-containing protein 3 (ARID3) from Arabidopsis thaliana (Mouse-ear cress).